Reading from the N-terminus, the 547-residue chain is Putative cysteine ligase BshC (547 aa).

Residues 461–504 adopt a coiled-coil conformation; sequence ASTEATRSAIMDEMEALKQKVVRAEKRQQDEVRAQLKKAHTNLR.

This sequence belongs to the BshC family.

The sequence is that of Putative cysteine ligase BshC from Salinibacter ruber (strain DSM 13855 / M31).